The chain runs to 34 residues: MSDIN-like toxin proprotein 3 (34 aa).

The propeptide occupies 1-10 (MSDINVIRAP). The segment at residues 11 to 18 (LLILSILP) is a cross-link (cyclopeptide (Leu-Pro)). Positions 19–34 (CVGDDIEVLRRGEGLS) are excised as a propeptide.

It belongs to the MSDIN fungal toxin family. Post-translationally, processed by the macrocyclase-peptidase enzyme POPB to yield a toxic cyclic octapeptide. POPB first removes 10 residues from the N-terminus. Conformational trapping of the remaining peptide forces the enzyme to release this intermediate rather than proceed to macrocyclization. The enzyme rebinds the remaining peptide in a different conformation and catalyzes macrocyclization of the N-terminal 8 residues. In terms of tissue distribution, expressed in basidiocarps.

Functionally, probable toxin that belongs to the MSDIN-like toxin family responsible for a large number of food poisoning cases and deaths. The sequence is that of MSDIN-like toxin proprotein 3 from Amanita exitialis (Guangzhou destroying angel).